We begin with the raw amino-acid sequence, 148 residues long: Glycine cleavage system H protein 5 (148 aa).

Residues 33–115 form the Lipoyl-binding domain; it reads VFTIGLTSVA…YGQGWIAKVK (83 aa). Lys-74 carries the post-translational modification N6-lipoyllysine.

Belongs to the GcvH family. In terms of assembly, the glycine cleavage system is composed of four proteins: P, T, L and H. Requires (R)-lipoate as cofactor.

Functionally, the glycine cleavage system catalyzes the degradation of glycine. The H protein shuttles the methylamine group of glycine from the P protein to the T protein. This is Glycine cleavage system H protein 5 from Aquifex aeolicus (strain VF5).